The sequence spans 456 residues: tRNA modification GTPase MnmE (456 aa).

(6S)-5-formyl-5,6,7,8-tetrahydrofolate is bound by residues Arg-26, Glu-86, and Arg-125. A TrmE-type G domain is found at Gly-222 to Phe-376. Residue Asn-232 coordinates K(+). Residues Asn-232–Ser-237, Thr-251–Thr-257, and Asp-276–Gly-279 each bind GTP. Ser-236 contacts Mg(2+). Positions 251, 253, and 256 each coordinate K(+). Thr-257 contributes to the Mg(2+) binding site. Position 456 (Lys-456) interacts with (6S)-5-formyl-5,6,7,8-tetrahydrofolate.

Belongs to the TRAFAC class TrmE-Era-EngA-EngB-Septin-like GTPase superfamily. TrmE GTPase family. In terms of assembly, homodimer. Heterotetramer of two MnmE and two MnmG subunits. Requires K(+) as cofactor.

Its subcellular location is the cytoplasm. Its function is as follows. Exhibits a very high intrinsic GTPase hydrolysis rate. Involved in the addition of a carboxymethylaminomethyl (cmnm) group at the wobble position (U34) of certain tRNAs, forming tRNA-cmnm(5)s(2)U34. The chain is tRNA modification GTPase MnmE from Streptococcus thermophilus (strain CNRZ 1066).